A 619-amino-acid chain; its full sequence is DNA mismatch repair protein MutL (619 aa).

Belongs to the DNA mismatch repair MutL/HexB family.

Its function is as follows. This protein is involved in the repair of mismatches in DNA. It is required for dam-dependent methyl-directed DNA mismatch repair. May act as a 'molecular matchmaker', a protein that promotes the formation of a stable complex between two or more DNA-binding proteins in an ATP-dependent manner without itself being part of a final effector complex. The chain is DNA mismatch repair protein MutL from Myxococcus xanthus (strain DK1622).